Here is a 399-residue protein sequence, read N- to C-terminus: Lovastatin esterase (399 aa).

The Nucleophile role is filled by Ser57. Residues Lys60 and Tyr170 each act as proton acceptor in the active site.

The protein belongs to the class-A beta-lactamase family.

It catalyses the reaction lovastatin + H2O = monacolin J + (S)-2-methylbutanoate + H(+). It carries out the reaction pravastatin lactone + H2O = pravastatin diol lactone + (S)-2-methylbutanoate + H(+). The enzyme catalyses mevastatin + H2O = compactin diol lactone + (S)-2-methylbutanoate + H(+). In terms of biological role, esterase that can hydrolyze the side chain of lovastatin to produce monacolin J. Is also able to hydrolyze the side chains of mevastatin and pravastatin, but not simvastatin. The protein is Lovastatin esterase of Penicillium rubens (strain ATCC 28089 / DSM 1075 / NRRL 1951 / Wisconsin 54-1255) (Penicillium chrysogenum).